We begin with the raw amino-acid sequence, 253 residues long: Imidazole glycerol phosphate synthase subunit HisF (253 aa).

Catalysis depends on residues aspartate 11 and aspartate 130.

The protein belongs to the HisA/HisF family. In terms of assembly, heterodimer of HisH and HisF.

It is found in the cytoplasm. It catalyses the reaction 5-[(5-phospho-1-deoxy-D-ribulos-1-ylimino)methylamino]-1-(5-phospho-beta-D-ribosyl)imidazole-4-carboxamide + L-glutamine = D-erythro-1-(imidazol-4-yl)glycerol 3-phosphate + 5-amino-1-(5-phospho-beta-D-ribosyl)imidazole-4-carboxamide + L-glutamate + H(+). It functions in the pathway amino-acid biosynthesis; L-histidine biosynthesis; L-histidine from 5-phospho-alpha-D-ribose 1-diphosphate: step 5/9. In terms of biological role, IGPS catalyzes the conversion of PRFAR and glutamine to IGP, AICAR and glutamate. The HisF subunit catalyzes the cyclization activity that produces IGP and AICAR from PRFAR using the ammonia provided by the HisH subunit. The protein is Imidazole glycerol phosphate synthase subunit HisF of Geotalea daltonii (strain DSM 22248 / JCM 15807 / FRC-32) (Geobacter daltonii).